A 141-amino-acid chain; its full sequence is Cystatin (141 aa).

Positions 1–26 (MVRSQLPVAAPLRLLCALLLLPSATM) are cleaved as a signal peptide. In terms of domain architecture, Cystatin spans 29-129 (GGLSPRSVTD…CHFQVWSRPW (101 aa)). Residues 73–77 (QVVSG) carry the Secondary area of contact motif. Intrachain disulfides connect cysteine 91–cysteine 107 and cysteine 120–cysteine 140.

Belongs to the cystatin family. Expressed at a low level by the venom gland (at protein level).

It localises to the secreted. Inhibits various C1 cysteine proteases including cathepsin L, papain and cathepsin B. This protein has no toxic activity and its function in the venom is unknown. It may play a role as a housekeeping or regulatory protein. In Micropechis ikaheca (New Guinean small-eyed snake), this protein is Cystatin.